Reading from the N-terminus, the 185-residue chain is Elongation factor P (185 aa).

It belongs to the elongation factor P family.

It localises to the cytoplasm. The protein operates within protein biosynthesis; polypeptide chain elongation. Functionally, involved in peptide bond synthesis. Stimulates efficient translation and peptide-bond synthesis on native or reconstituted 70S ribosomes in vitro. Probably functions indirectly by altering the affinity of the ribosome for aminoacyl-tRNA, thus increasing their reactivity as acceptors for peptidyl transferase. This is Elongation factor P (efp) from Thermotoga maritima (strain ATCC 43589 / DSM 3109 / JCM 10099 / NBRC 100826 / MSB8).